The sequence spans 842 residues: MVAIPRVAAARSLARQLARQSLRTTSFASAPVRIAIASTPLARSPSSFRSLSSSTRRSAAAAAAAAAAKATPAHDDSHTPMAVLTEADLGRLVRQRNVGISAHIDSGKTTLTERVLFYTGRIKDIHEVRGRDAVGAKMDHMELEREKGITIQSAATYCSWKATPPTEKASVSGDAANVESKELMEKKQDFHINIIDTPGHVDFTIEVERALRVLDGAVLVLCAVSGVQSQTITVDRQMRRYSVPRISFINKMDRAGANPWRVIGQIRNKLKMPAAAVQIPIGAEDDFNGVIDLIRWKAVYNEGHKGIDIRETDEIPAEYLELAKQKRAELIEQLAEVDDEMTEMFIEEREPTIEELAAAIRRTTIRCQFSPVFLGSAIKNKGVQAMLDGVCSYLPNPAEVPATAMDMSSAATKKAAEEAAQAAGEDQEAAAEARKNAAPPVLPLSPASEAPLVGLAFKLEEGKYGQLTYMRVYQGTLKRGNLIFNARTGKKVKVPRLVRMHSNDMEDVDEIGAGEICAMFGVECSSGDTFTDGTTQLSMTSMFVPEPVISLAITPEGKESQNFSRALNRFQKEDPTFRVHVDKESNETIISGMGELHLEIYVERMRREYNVPCTTGKPRVAFRETIEKKATFAYTHKKQTGGAGQFGRVMGYIEPMEVDPETGVDTAFDNRVVGGSIPNGYISACEKGFYDALEKGALSGHAVTGVRFVLEDGAAHSVDSSELAFRLATAGAFREAYQKANPVILEPKMTVEVVAPIEFQGAVIGALNQRKGTISDTEVREDEFTLTAEVSLNDMFGYSSQLRGLTQGKGEFSMEYKCHTPVMMNIQKEMHEAYRKKQTEKK.

The N-terminal 58 residues, 1–58, are a transit peptide targeting the mitochondrion; that stretch reads MVAIPRVAAARSLARQLARQSLRTTSFASAPVRIAIASTPLARSPSSFRSLSSSTRRS. The 306-residue stretch at 93-398 folds into the tr-type G domain; that stretch reads VRQRNVGISA…GVCSYLPNPA (306 aa). Residues 102–109, 196–200, and 250–253 contribute to the GTP site; these read AHIDSGKT, DTPGH, and NKMD. Residues 423–442 are disordered; the sequence is AGEDQEAAAEARKNAAPPVL.

The protein belongs to the TRAFAC class translation factor GTPase superfamily. Classic translation factor GTPase family. EF-G/EF-2 subfamily.

It is found in the mitochondrion. Its pathway is protein biosynthesis; polypeptide chain elongation. Functionally, mitochondrial GTPase that catalyzes the GTP-dependent ribosomal translocation step during translation elongation. During this step, the ribosome changes from the pre-translocational (PRE) to the post-translocational (POST) state as the newly formed A-site-bound peptidyl-tRNA and P-site-bound deacylated tRNA move to the P and E sites, respectively. Catalyzes the coordinated movement of the two tRNA molecules, the mRNA and conformational changes in the ribosome. The chain is Elongation factor G, mitochondrial from Mycosarcoma maydis (Corn smut fungus).